A 127-amino-acid chain; its full sequence is Two-component response regulator ORR41 (127 aa).

The 119-residue stretch at 7-125 (RVLLVEDEEI…KLGVILAKFR (119 aa)) folds into the Response regulatory domain. D60 is modified (4-aspartylphosphate).

Belongs to the ARR family. Type-C subfamily. Two-component system major event consists of a His-to-Asp phosphorelay between a sensor histidine kinase (HK) and a response regulator (RR). In plants, the His-to-Asp phosphorelay involves an additional intermediate named Histidine-containing phosphotransfer protein (HPt). This multistep phosphorelay consists of a His-Asp-His-Asp sequential transfer of a phosphate group between first a His and an Asp of the HK protein, followed by the transfer to a conserved His of the HPt protein and finally the transfer to an Asp in the receiver domain of the RR protein.

Its function is as follows. Functions as a response regulator involved in His-to-Asp phosphorelay signal transduction system. Phosphorylation of the Asp residue in the receiver domain activates the ability of the protein to promote the transcription of target genes. May directly activate some type-A response regulators in response to cytokinins. This is Two-component response regulator ORR41 from Oryza sativa subsp. japonica (Rice).